A 195-amino-acid polypeptide reads, in one-letter code: 3-isopropylmalate dehydratase small subunit (195 aa).

This sequence belongs to the LeuD family. LeuD type 1 subfamily. In terms of assembly, heterodimer of LeuC and LeuD.

It carries out the reaction (2R,3S)-3-isopropylmalate = (2S)-2-isopropylmalate. Its pathway is amino-acid biosynthesis; L-leucine biosynthesis; L-leucine from 3-methyl-2-oxobutanoate: step 2/4. In terms of biological role, catalyzes the isomerization between 2-isopropylmalate and 3-isopropylmalate, via the formation of 2-isopropylmaleate. In Frankia alni (strain DSM 45986 / CECT 9034 / ACN14a), this protein is 3-isopropylmalate dehydratase small subunit.